The chain runs to 427 residues: Enolase (427 aa).

Gln-162 is a (2R)-2-phosphoglycerate binding site. The active-site Proton donor is Glu-204. Residues Asp-241, Glu-282, and Asp-309 each coordinate Mg(2+). (2R)-2-phosphoglycerate-binding residues include Lys-334, Arg-363, Ser-364, and Lys-385. Lys-334 serves as the catalytic Proton acceptor.

The protein belongs to the enolase family. Mg(2+) serves as cofactor.

Its subcellular location is the cytoplasm. The protein resides in the secreted. It localises to the cell surface. The catalysed reaction is (2R)-2-phosphoglycerate = phosphoenolpyruvate + H2O. It functions in the pathway carbohydrate degradation; glycolysis; pyruvate from D-glyceraldehyde 3-phosphate: step 4/5. Functionally, catalyzes the reversible conversion of 2-phosphoglycerate (2-PG) into phosphoenolpyruvate (PEP). It is essential for the degradation of carbohydrates via glycolysis. The sequence is that of Enolase from Parafrankia sp. (strain EAN1pec).